Consider the following 539-residue polypeptide: Chaperonin GroEL (539 aa).

ATP-binding positions include 29–32 (TLGP), 86–90 (DGTTT), glycine 413, 477–479 (DAL), and aspartate 493.

Belongs to the chaperonin (HSP60) family. In terms of assembly, forms a cylinder of 14 subunits composed of two heptameric rings stacked back-to-back. Interacts with the co-chaperonin GroES.

Its subcellular location is the cytoplasm. It catalyses the reaction ATP + H2O + a folded polypeptide = ADP + phosphate + an unfolded polypeptide.. In terms of biological role, together with its co-chaperonin GroES, plays an essential role in assisting protein folding. The GroEL-GroES system forms a nano-cage that allows encapsulation of the non-native substrate proteins and provides a physical environment optimized to promote and accelerate protein folding. This is Chaperonin GroEL from Clostridium perfringens (strain 13 / Type A).